A 298-amino-acid polypeptide reads, in one-letter code: uncharacterized protein (298 aa).

This is an uncharacterized protein from Acanthamoeba polyphaga mimivirus (APMV).